We begin with the raw amino-acid sequence, 493 residues long: Cysteine--tRNA ligase (493 aa).

A Zn(2+)-binding site is contributed by Cys29. The short motif at Val31–His41 is the 'HIGH' region element. The Zn(2+) site is built by Cys209, His234, and Glu238. The 'KMSKS' region motif lies at Lys266 to Ser270. Lys269 is an ATP binding site.

Belongs to the class-I aminoacyl-tRNA synthetase family. Monomer. Zn(2+) is required as a cofactor.

Its subcellular location is the cytoplasm. It carries out the reaction tRNA(Cys) + L-cysteine + ATP = L-cysteinyl-tRNA(Cys) + AMP + diphosphate. This is Cysteine--tRNA ligase from Syntrophobacter fumaroxidans (strain DSM 10017 / MPOB).